The following is a 552-amino-acid chain: Probable glucomannan 4-beta-mannosyltransferase 10 (552 aa).

Residues 62–82 (IVPLFKCLVAFCLIISLLVFI) traverse the membrane as a helical segment. The active site involves Asp161. Asp220 and Asp222 together coordinate substrate. Asp314 is an active-site residue. 4 consecutive transmembrane segments (helical) span residues 393–413 (IIVH…SVFF), 430–450 (ITLC…FWIL), 509–529 (EIMV…FGNT), and 530–550 (LLYL…VGFV).

Belongs to the glycosyltransferase 2 family. Plant cellulose synthase-like A subfamily.

The protein localises to the golgi apparatus membrane. It catalyses the reaction GDP-mannose + (glucomannan)n = GDP + (glucomannan)n+1.. Probable mannan synthase which consists of a 4-beta-mannosyltransferase activity on mannan using GDP-mannose. The beta-1,4-mannan product is the backbone for galactomannan synthesis by galactomannan galactosyltransferase. Galactomannan is a noncellulosic polysaccharides of plant cell wall. The protein is Probable glucomannan 4-beta-mannosyltransferase 10 of Arabidopsis thaliana (Mouse-ear cress).